The primary structure comprises 126 residues: Acyl carrier protein 2, mitochondrial (126 aa).

The transit peptide at methionine 1 to phenylalanine 36 directs the protein to the mitochondrion. Positions serine 48–proline 123 constitute a Carrier domain. The residue at position 83 (serine 83) is an O-(pantetheine 4'-phosphoryl)serine.

It belongs to the acyl carrier protein (ACP) family. In terms of assembly, complex I is composed of at least 49 different subunits. 4'-phosphopantetheine is transferred from CoA to a specific serine of the apo-ACP-like protein.

The protein resides in the mitochondrion. It functions in the pathway lipid metabolism; fatty acid biosynthesis. Functionally, carrier of the growing fatty acid chain in fatty acid biosynthesis. May be involved in the synthesis of short and medium chain fatty acids. Accessory and non-catalytic subunit of the mitochondrial membrane respiratory chain NADH dehydrogenase (Complex I), which functions in the transfer of electrons from NADH to the respiratory chain. This is Acyl carrier protein 2, mitochondrial (MTACP2) from Arabidopsis thaliana (Mouse-ear cress).